The chain runs to 317 residues: Cytochrome f (317 aa).

Positions 1 to 34 are cleaved as a signal peptide; that stretch reads MKGLKNQIMKKTSLFICTLLFISSIVFHPKITFA. Residues Y35, C55, C58, and H59 each coordinate heme. A helical membrane pass occupies residues 284-304; it reads VIGLIAFFIGVGLTQILLVLK.

Belongs to the cytochrome f family. As to quaternary structure, the 4 large subunits of the cytochrome b6-f complex are cytochrome b6, subunit IV (17 kDa polypeptide, PetD), cytochrome f and the Rieske protein, while the 4 small subunits are PetG, PetL, PetM and PetN. The complex functions as a dimer. Requires heme as cofactor.

The protein localises to the cellular thylakoid membrane. Component of the cytochrome b6-f complex, which mediates electron transfer between photosystem II (PSII) and photosystem I (PSI), cyclic electron flow around PSI, and state transitions. The polypeptide is Cytochrome f (Prochlorococcus marinus (strain MIT 9301)).